A 430-amino-acid polypeptide reads, in one-letter code: Ribosomal protein uS12 methylthiotransferase RimO (430 aa).

The MTTase N-terminal domain maps to 2–119 (ISVYSISLGC…WPAMLAHALK (118 aa)). The [4Fe-4S] cluster site is built by C11, C46, C81, C145, C149, and C152. The region spanning 131-361 (STGPSYAWLK…MEVQAEISEE (231 aa)) is the Radical SAM core domain. Residues 364-430 (AVHEGTRQQV…TRTYDLVALV (67 aa)) form the TRAM domain.

Belongs to the methylthiotransferase family. RimO subfamily. [4Fe-4S] cluster serves as cofactor.

It is found in the cytoplasm. It catalyses the reaction L-aspartate(89)-[ribosomal protein uS12]-hydrogen + (sulfur carrier)-SH + AH2 + 2 S-adenosyl-L-methionine = 3-methylsulfanyl-L-aspartate(89)-[ribosomal protein uS12]-hydrogen + (sulfur carrier)-H + 5'-deoxyadenosine + L-methionine + A + S-adenosyl-L-homocysteine + 2 H(+). Its function is as follows. Catalyzes the methylthiolation of an aspartic acid residue of ribosomal protein uS12. The sequence is that of Ribosomal protein uS12 methylthiotransferase RimO from Nitratidesulfovibrio vulgaris (strain DP4) (Desulfovibrio vulgaris).